A 63-amino-acid chain; its full sequence is Large ribosomal subunit protein bL28 (63 aa).

It belongs to the bacterial ribosomal protein bL28 family.

This is Large ribosomal subunit protein bL28 from Sulfurihydrogenibium sp. (strain YO3AOP1).